The chain runs to 899 residues: Core protein VP3 (899 aa).

A disordered region spans residues 1–21; it reads MADPPDANVPKTSPYLKGDEL.

The protein belongs to the orbivirus VP3 family.

It localises to the virion. Its function is as follows. The VP3 protein is one of the five proteins (with VP1, VP4, VP6 and VP7) which form the inner capsid of the virus. The protein is Core protein VP3 (Segment-3) of Epizootic hemorrhagic disease virus 1 (EHDV-1).